Reading from the N-terminus, the 46-residue chain is Large ribosomal subunit protein bL34 (46 aa).

Residues 25–46 (TASGRQVLRRRRAKGRYRLAVS) form a disordered region. Residues 31–46 (VLRRRRAKGRYRLAVS) are compositionally biased toward basic residues.

The protein belongs to the bacterial ribosomal protein bL34 family.

This Synechococcus sp. (strain JA-3-3Ab) (Cyanobacteria bacterium Yellowstone A-Prime) protein is Large ribosomal subunit protein bL34.